The primary structure comprises 997 residues: Glutamate [NMDA] receptor subunit 1 (997 aa).

A signal peptide spans 1 to 26 (MAVAGFVFCRPLFGLAIVLLVAPIDA). Topologically, residues 27–573 (AQRHTASDNP…TLVSFLQPFS (547 aa)) are extracellular. 7 N-linked (GlcNAc...) asparagine glycosylation sites follow: Asn-258, Asn-314, Asn-345, Asn-397, Asn-454, Asn-481, and Asn-501. Residues 530–532 (PLT) and Arg-537 contribute to the glycine site. A helical transmembrane segment spans residues 574 to 594 (NTLWILVMVSVHVVALVLYLL). Residues 595–651 (DRFSPFGRFKLSHSDSNEEKALNLSSAVWFAWGVLLNSGIGEGTPRSFSARVLGMVW) are Cytoplasmic-facing. The chain crosses the membrane as a helical span at residues 652 to 672 (AGFAMIIVASYTANLAAFLVL). At 673–831 (ERPKTKLSGI…KTPNTLGLKN (159 aa)) the chain is on the extracellular side. Residue Asn-693 is glycosylated (N-linked (GlcNAc...) asparagine). Residues Ser-703 and Asp-747 each coordinate glycine. Residues 832 to 852 (MAGVFILVGVGIAGGVGLIII) traverse the membrane as a helical segment. Topologically, residues 853–997 (EVIYKKHQVK…YTSDVSHLVV (145 aa)) are cytoplasmic. The tract at residues 970–997 (LGKTRPQQSVLPPRYSPGYTSDVSHLVV) is disordered. A compositionally biased stretch (polar residues) spans 987–997 (GYTSDVSHLVV).

This sequence belongs to the glutamate-gated ion channel (TC 1.A.10.1) family. Forms a heteromeric NMDA channel with Nmdar2.

The protein resides in the cell membrane. The protein localises to the postsynaptic cell membrane. It is found in the postsynaptic density. Functionally, NMDA receptor subtype of glutamate-gated ion channels with high calcium permeability and voltage-dependent sensitivity to magnesium. Mediated by glycine. This protein plays a key role in synaptic plasticity, synaptogenesis, excitotoxicity, memory acquisition and learning. It mediates neuronal functions in glutamate neurotransmission. Is involved in the cell surface targeting of NMDA receptors. Plays a role in associative learning and in long-term memory consolidation. This chain is Glutamate [NMDA] receptor subunit 1, found in Drosophila sechellia (Fruit fly).